A 607-amino-acid polypeptide reads, in one-letter code: Type 3 secretion system secretin (607 aa).

The first 33 residues, 1 to 33, serve as a signal peptide directing secretion; it reads MAPACTTAHRRRAPLAAVLMLSLLPLLSPHADA. The interval 277–332 is disordered; sequence ASSSDRVPVSPPLPGSGAAAAAGSPASVWPELSKGRRDESNPIDAGGGAELASDAP. Over residues 291 to 306 the composition is skewed to low complexity; the sequence is GSGAAAAAGSPASVWP.

The protein belongs to the bacterial secretin family. T3SS SctC subfamily. In terms of assembly, the core secretion machinery of the T3SS is composed of approximately 20 different proteins, including cytoplasmic components, a base, an export apparatus and a needle. This subunit is part of the base, which anchors the injectisome in the bacterial cell envelope. Forms a stable homooligomeric complex.

It is found in the cell outer membrane. In terms of biological role, component of the type III secretion system (T3SS), also called injectisome, which is used to inject bacterial effector proteins into eukaryotic host cells. Forms a ring-shaped multimeric structure with an apparent central pore in the outer membrane. Necessary for both basic pathogenicity and the induction of the hypersensitive response in resistant plants. This Xanthomonas euvesicatoria protein is Type 3 secretion system secretin.